A 207-amino-acid chain; its full sequence is Glycerol-3-phosphate acyltransferase (207 aa).

Helical transmembrane passes span 3–23 (LIGL…VWVG), 54–74 (TIVM…PIVF), 81–101 (GTAT…VSIF), 122–142 (PIMF…TSIV), and 158–178 (LVFQ…FVFY).

The protein belongs to the PlsY family. In terms of assembly, probably interacts with PlsX.

The protein localises to the cell membrane. It catalyses the reaction an acyl phosphate + sn-glycerol 3-phosphate = a 1-acyl-sn-glycero-3-phosphate + phosphate. It participates in lipid metabolism; phospholipid metabolism. Its function is as follows. Catalyzes the transfer of an acyl group from acyl-phosphate (acyl-PO(4)) to glycerol-3-phosphate (G3P) to form lysophosphatidic acid (LPA). This enzyme utilizes acyl-phosphate as fatty acyl donor, but not acyl-CoA or acyl-ACP. This Levilactobacillus brevis (strain ATCC 367 / BCRC 12310 / CIP 105137 / JCM 1170 / LMG 11437 / NCIMB 947 / NCTC 947) (Lactobacillus brevis) protein is Glycerol-3-phosphate acyltransferase.